A 341-amino-acid chain; its full sequence is Pyrophosphate--fructose 6-phosphate 1-phosphotransferase (341 aa).

Residue Gly10 coordinates diphosphate. Residue Glu103 participates in Mg(2+) binding. Substrate is bound by residues 125-127, Arg162, 169-171, Glu221, Arg265, and 271-274; these read TID, MGR, and HVQR. The active-site Proton acceptor is Asp127.

Belongs to the phosphofructokinase type A (PFKA) family. Mixed-substrate PFK group III subfamily. As to quaternary structure, homodimer or homotetramer. Mg(2+) serves as cofactor.

It is found in the cytoplasm. It carries out the reaction beta-D-fructose 6-phosphate + diphosphate = beta-D-fructose 1,6-bisphosphate + phosphate + H(+). Its pathway is carbohydrate degradation; glycolysis; D-glyceraldehyde 3-phosphate and glycerone phosphate from D-glucose: step 3/4. Non-allosteric. Catalyzes the phosphorylation of D-fructose 6-phosphate, the first committing step of glycolysis. Uses inorganic phosphate (PPi) as phosphoryl donor instead of ATP like common ATP-dependent phosphofructokinases (ATP-PFKs), which renders the reaction reversible, and can thus function both in glycolysis and gluconeogenesis. Consistently, PPi-PFK can replace the enzymes of both the forward (ATP-PFK) and reverse (fructose-bisphosphatase (FBPase)) reactions. The sequence is that of Pyrophosphate--fructose 6-phosphate 1-phosphotransferase from Amycolatopsis mediterranei (strain S699) (Nocardia mediterranei).